The following is a 521-amino-acid chain: MLDTNMKTQLKAYLEKLTKPVELIATLDDSAKSAEIKELLAEIAELSDKVTFKEDNSLPVRKPSFLITNPGSNQGPRFAGSPLGHEFTSLVLALLWTGGHPSKEAQSLLEQIRHIDGDFEFETYYSLSCHNCPDVVQALNLMSVLNPRIKHTAIDGGTFQNEITDRNVMGVPAVFVNGKEFGQGRMTLTEIVAKIDTGAEKRAAEELNKRDAYDVLIVGSGPAGAAAAIYSARKGIRTGLMGERFGGQILDTVDIENYISVPKTEGQKLAGALKVHVDEYDVDVIDSQSASKLIPAAVEGGLHQIETASGAVLKARSIIVATGAKWRNMNVPGEDQYRTKGVTYCPHCDGPLFKGKRVAVIGGGNSGVEAAIDLAGIVEHVTLLEFAPEMKADQVLQDKLRSLKNVDIILNAQTTEVKGDGSKVVGLEYRDRVSGDIHNIELAGIFVQIGLLPNTNWLEGAVERNRMGEIIIDAKCETNVKGVFAAGDCTTVPYKQIIIATGEGAKASLSAFDYLIRTKTA.

Lysine 53 carries the post-translational modification N6-acetyllysine. Residue 214–229 (DVLIVGSGPAGAAAAI) coordinates FAD. A disulfide bond links cysteine 345 and cysteine 348. An N6-acetyllysine modification is found at lysine 354. 357–371 (RVAVIGGGNSGVEAA) provides a ligand contact to NAD(+). 478–488 (TNVKGVFAAGD) contributes to the FAD binding site.

It belongs to the class-II pyridine nucleotide-disulfide oxidoreductase family. Homodimer. The cofactor is FAD.

Serves to protect the cell against DNA damage by alkyl hydroperoxides. It can use either NADH or NADPH as electron donor for direct reduction of redox dyes or of alkyl hydroperoxides when combined with the AhpC protein. The chain is Alkyl hydroperoxide reductase subunit F (ahpF) from Escherichia coli (strain K12).